Consider the following 148-residue polypeptide: Small ribosomal subunit protein uS13 (148 aa).

This sequence belongs to the universal ribosomal protein uS13 family. As to quaternary structure, part of the 30S ribosomal subunit. Forms a loose heterodimer with protein S19. Forms two bridges to the 50S subunit in the 70S ribosome.

In terms of biological role, located at the top of the head of the 30S subunit, it contacts several helices of the 16S rRNA. In the 70S ribosome it contacts the 23S rRNA (bridge B1a) and protein L5 of the 50S subunit (bridge B1b), connecting the 2 subunits; these bridges are implicated in subunit movement. The sequence is that of Small ribosomal subunit protein uS13 from Pyrococcus horikoshii (strain ATCC 700860 / DSM 12428 / JCM 9974 / NBRC 100139 / OT-3).